The sequence spans 204 residues: FMN-dependent NADH:quinone oxidoreductase 5 (204 aa).

Residue Ser-10 participates in FMN binding.

The protein belongs to the azoreductase type 1 family. As to quaternary structure, homodimer. The cofactor is FMN.

It catalyses the reaction 2 a quinone + NADH + H(+) = 2 a 1,4-benzosemiquinone + NAD(+). It carries out the reaction N,N-dimethyl-1,4-phenylenediamine + anthranilate + 2 NAD(+) = 2-(4-dimethylaminophenyl)diazenylbenzoate + 2 NADH + 2 H(+). Functionally, quinone reductase that provides resistance to thiol-specific stress caused by electrophilic quinones. Also exhibits azoreductase activity. Catalyzes the reductive cleavage of the azo bond in aromatic azo compounds to the corresponding amines. The protein is FMN-dependent NADH:quinone oxidoreductase 5 of Burkholderia lata (strain ATCC 17760 / DSM 23089 / LMG 22485 / NCIMB 9086 / R18194 / 383).